The chain runs to 498 residues: Serine hydroxymethyltransferase, mitochondrial (498 aa).

The residue at position 273 (lysine 273) is an N6-(pyridoxal phosphate)lysine.

It belongs to the SHMT family. In terms of assembly, homotetramer. Pyridoxal 5'-phosphate is required as a cofactor.

It is found in the mitochondrion. The enzyme catalyses (6R)-5,10-methylene-5,6,7,8-tetrahydrofolate + glycine + H2O = (6S)-5,6,7,8-tetrahydrofolate + L-serine. The protein operates within one-carbon metabolism; tetrahydrofolate interconversion. Interconversion of serine and glycine. The sequence is that of Serine hydroxymethyltransferase, mitochondrial (SHM1) from Kluyveromyces lactis (strain ATCC 8585 / CBS 2359 / DSM 70799 / NBRC 1267 / NRRL Y-1140 / WM37) (Yeast).